The sequence spans 567 residues: Glucose-6-phosphate isomerase, cytosolic (567 aa).

The active-site Proton donor is Glu360. Catalysis depends on residues His391 and Lys516.

It belongs to the GPI family. As to quaternary structure, homodimer.

It is found in the cytoplasm. The catalysed reaction is alpha-D-glucose 6-phosphate = beta-D-fructose 6-phosphate. It participates in carbohydrate degradation; glycolysis; D-glyceraldehyde 3-phosphate and glycerone phosphate from D-glucose: step 2/4. The sequence is that of Glucose-6-phosphate isomerase, cytosolic (PHI1) from Zea mays (Maize).